Here is a 135-residue protein sequence, read N- to C-terminus: Large ribosomal subunit protein bL21 (135 aa).

The disordered stretch occupies residues 114-135; the sequence is EAEKETPVLDETPAEEVETAAE. The segment covering 125 to 135 has biased composition (acidic residues); it reads TPAEEVETAAE.

This sequence belongs to the bacterial ribosomal protein bL21 family. As to quaternary structure, part of the 50S ribosomal subunit. Contacts protein L20.

In terms of biological role, this protein binds to 23S rRNA in the presence of protein L20. This Nostoc punctiforme (strain ATCC 29133 / PCC 73102) protein is Large ribosomal subunit protein bL21.